Reading from the N-terminus, the 513-residue chain is Bifunctional purine biosynthesis protein PurH (513 aa).

Residues 1–145 enclose the MGS-like domain; that stretch reads MTKKAIISVY…KNFKYITVII (145 aa).

The protein belongs to the PurH family.

The enzyme catalyses (6R)-10-formyltetrahydrofolate + 5-amino-1-(5-phospho-beta-D-ribosyl)imidazole-4-carboxamide = 5-formamido-1-(5-phospho-D-ribosyl)imidazole-4-carboxamide + (6S)-5,6,7,8-tetrahydrofolate. It carries out the reaction IMP + H2O = 5-formamido-1-(5-phospho-D-ribosyl)imidazole-4-carboxamide. The protein operates within purine metabolism; IMP biosynthesis via de novo pathway; 5-formamido-1-(5-phospho-D-ribosyl)imidazole-4-carboxamide from 5-amino-1-(5-phospho-D-ribosyl)imidazole-4-carboxamide (10-formyl THF route): step 1/1. It functions in the pathway purine metabolism; IMP biosynthesis via de novo pathway; IMP from 5-formamido-1-(5-phospho-D-ribosyl)imidazole-4-carboxamide: step 1/1. The protein is Bifunctional purine biosynthesis protein PurH of Caldicellulosiruptor saccharolyticus (strain ATCC 43494 / DSM 8903 / Tp8T 6331).